A 273-amino-acid polypeptide reads, in one-letter code: SKA complex subunit 1 homolog (273 aa).

Positions 77-97 (KKLVQRSLKEEEKLQHMLANL) form a coiled coil.

It belongs to the SKA1 family.

The chain is SKA complex subunit 1 homolog from Zea mays (Maize).